Here is a 913-residue protein sequence, read N- to C-terminus: Clumping factor B (913 aa).

A signal peptide spans Met-1–Ala-44. Positions Tyr-15–Ser-26 match the YSIRK-G/S signaling motif motif. 2 stretches are compositionally biased toward polar residues: residues Ala-44–Ala-61 and Met-68–Ser-95. Residues Ala-44–Thr-192 are disordered. The ligand binding A region stretch occupies residues Ser-45–Asn-542. Low complexity predominate over residues Thr-96 to Pro-119. The span at Gln-120–Ser-189 shows a compositional bias: polar residues. The short motif at Asp-272 to Ser-276 is the MIDAS-like motif element. Residues Tyr-530–Asn-885 form a disordered region. Positions Asp-545 to Glu-555 are enriched in pro residues. The span at Pro-556–Asp-837 shows a compositional bias: acidic residues. Positions Arg-841–Pro-852 are enriched in polar residues. A compositionally biased stretch (basic and acidic residues) spans His-869 to Glu-882. The LPXTG sorting signal signature appears at Leu-874–Gly-878. At Thr-877 the chain carries Pentaglycyl murein peptidoglycan amidated threonine. Residues Gly-878–Ala-913 constitute a propeptide, removed by sortase.

Belongs to the serine-aspartate repeat-containing protein (SDr) family. Post-translationally, proteolytically cleaved by aureolysin (aur). This cleavage leads to the inactivation of ClfB.

The protein localises to the secreted. It localises to the cell wall. Its function is as follows. Cell surface-associated protein implicated in virulence by promoting bacterial attachment to both alpha- and beta-chains of human fibrinogen and inducing the formation of bacterial clumps. The protein is Clumping factor B (clfB) of Staphylococcus aureus (strain COL).